Reading from the N-terminus, the 586-residue chain is 2-succinyl-5-enolpyruvyl-6-hydroxy-3-cyclohexene-1-carboxylate synthase (586 aa).

This sequence belongs to the TPP enzyme family. MenD subfamily. As to quaternary structure, homodimer. Mg(2+) serves as cofactor. Requires Mn(2+) as cofactor. It depends on thiamine diphosphate as a cofactor.

The enzyme catalyses isochorismate + 2-oxoglutarate + H(+) = 5-enolpyruvoyl-6-hydroxy-2-succinyl-cyclohex-3-ene-1-carboxylate + CO2. Its pathway is quinol/quinone metabolism; 1,4-dihydroxy-2-naphthoate biosynthesis; 1,4-dihydroxy-2-naphthoate from chorismate: step 2/7. It participates in cofactor biosynthesis; phylloquinone biosynthesis. In terms of biological role, catalyzes the thiamine diphosphate-dependent decarboxylation of 2-oxoglutarate and the subsequent addition of the resulting succinic semialdehyde-thiamine pyrophosphate anion to isochorismate to yield 2-succinyl-5-enolpyruvyl-6-hydroxy-3-cyclohexene-1-carboxylate (SEPHCHC). This Acaryochloris marina (strain MBIC 11017) protein is 2-succinyl-5-enolpyruvyl-6-hydroxy-3-cyclohexene-1-carboxylate synthase.